Reading from the N-terminus, the 521-residue chain is Protein disulfide-isomerase A5 (521 aa).

Positions 1-25 (MARVVPAWLLLPLAVWVVLPTWLSS) are cleaved as a signal peptide. 3 consecutive Thioredoxin domains span residues 136–263 (FLKD…NPQP), 274–386 (ADEG…NPES), and 387–508 (PPPP…TLRE). 3 disulfide bridges follow: Cys184–Cys187, Cys307–Cys310, and Cys428–Cys431. The Prevents secretion from ER motif lies at 518 to 521 (KEEL).

The protein belongs to the protein disulfide isomerase family.

The protein localises to the endoplasmic reticulum lumen. It carries out the reaction Catalyzes the rearrangement of -S-S- bonds in proteins.. The protein is Protein disulfide-isomerase A5 (PDIA5) of Bos taurus (Bovine).